Consider the following 152-residue polypeptide: Putative pre-16S rRNA nuclease (152 aa).

This sequence belongs to the YqgF nuclease family.

The protein resides in the cytoplasm. Functionally, could be a nuclease involved in processing of the 5'-end of pre-16S rRNA. This is Putative pre-16S rRNA nuclease from Nitrosococcus oceani (strain ATCC 19707 / BCRC 17464 / JCM 30415 / NCIMB 11848 / C-107).